A 516-amino-acid polypeptide reads, in one-letter code: Endoglucanase 17 (516 aa).

The N-terminal stretch at Met-1–Gly-29 is a signal peptide. Residue Asp-105 is the Nucleophile of the active site. Active-site residues include His-433, Asp-484, and Glu-493.

This sequence belongs to the glycosyl hydrolase 9 (cellulase E) family.

The protein resides in the secreted. It catalyses the reaction Endohydrolysis of (1-&gt;4)-beta-D-glucosidic linkages in cellulose, lichenin and cereal beta-D-glucans.. The sequence is that of Endoglucanase 17 from Arabidopsis thaliana (Mouse-ear cress).